A 298-amino-acid chain; its full sequence is MLKMEDDQFERFVGLFSMKDEDFPYNSQVTNEIQTFRKQQVDSQLFFDVLLSFIEGIEDPSSLYPPKSIDDLQSLFMIIENSNIDELKQQCFYYYLLKDWEKSETYSEQVSLPKNYQHLMDGYYYLDRLKFEEAINHLLLPDVLPNFPDKIIETLYSNEKYKFLIRFVSFVGPPLDTFRKEECYALSLVRYSFLASYHYMKKCTKPLVLWEEMIQLILESNDTQSCKLIVSLPLSQEECEVLFSLLRSKKEPLYLNTLLALLVESNNIQEALELSSNSTHLQKSAVNTYLHKLNSLSS.

The protein resides in the cytoplasm. Its subcellular location is the nucleus. This is an uncharacterized protein from Schizosaccharomyces pombe (strain 972 / ATCC 24843) (Fission yeast).